The following is a 175-amino-acid chain: Keratin-associated protein 13-2 (175 aa).

5 tandem repeats follow at residues 46 to 55 (CQLGSSLYRG), 56 to 65 (CQEICWEPTS), 66 to 75 (CQTSYVESSP), 76 to 85 (CQTSCYRPRT), and 92 to 101 (CKTTYSGSLG). The tract at residues 46-101 (CQLGSSLYRGCQEICWEPTSCQTSYVESSPCQTSCYRPRTSLLCSPCKTTYSGSLG) is 5 X 10 AA approximate repeats.

The protein belongs to the PMG family. As to quaternary structure, interacts with hair keratins.

Its function is as follows. In the hair cortex, hair keratin intermediate filaments are embedded in an interfilamentous matrix, consisting of hair keratin-associated proteins (KRTAP), which are essential for the formation of a rigid and resistant hair shaft through their extensive disulfide bond cross-linking with abundant cysteine residues of hair keratins. The matrix proteins include the high-sulfur and high-glycine-tyrosine keratins. The sequence is that of Keratin-associated protein 13-2 (KRTAP13-2) from Homo sapiens (Human).